Here is a 371-residue protein sequence, read N- to C-terminus: RNA-binding protein 48 (371 aa).

The RRM domain occupies 46–124; it reads QYLLIQGVPA…GLLHVCYAPE (79 aa). Disordered stretches follow at residues 220-249 and 343-371; these read EHTD…AFPP and EVTS…RRRI.

It belongs to the RBM48 family. Component of the minor spliceosome. Within this complex, interacts with ARMC7 and PRPF8/PRP8.

Functionally, as a component of the minor spliceosome, involved in the splicing of U12-type introns in pre-mRNAs. The sequence is that of RNA-binding protein 48 (Rbm48) from Rattus norvegicus (Rat).